The primary structure comprises 156 residues: Ribonuclease H (156 aa).

The RNase H type-1 domain maps to 1-142; that stretch reads MNKQVEIFTD…CDELARQAAE (142 aa). 4 residues coordinate Mg(2+): Asp-10, Glu-48, Asp-70, and Asp-134. Residues 135–156 form a disordered region; that stretch reads ELARQAAENPTEDDIGYQPEPQ.

It belongs to the RNase H family. Monomer. It depends on Mg(2+) as a cofactor.

It localises to the cytoplasm. The catalysed reaction is Endonucleolytic cleavage to 5'-phosphomonoester.. In terms of biological role, endonuclease that specifically degrades the RNA of RNA-DNA hybrids. In Vibrio cholerae serotype O1 (strain M66-2), this protein is Ribonuclease H.